Reading from the N-terminus, the 234-residue chain is Interleukin-27 subunit alpha (234 aa).

An N-terminal signal peptide occupies residues 1 to 28 (MGQVTGDLGWRLSLLLLPLLLVQAGSWG). N-linked (GlcNAc...) asparagine glycosylation is present at asparagine 85. A disordered region spans residues 160–185 (KEEEDKEEEEEEEEEEKKLPLGALGG). A compositionally biased stretch (acidic residues) spans 161–174 (EEEDKEEEEEEEEE).

It belongs to the IL-6 superfamily. In terms of assembly, heterodimer with EBI3; not disulfide-linked. This heterodimer is known as interleukin IL-27. O-glycosylated. As to expression, expressed in macrophages and dendritic cells.

Its subcellular location is the secreted. Its function is as follows. Associates with EBI3 to form the IL-27 interleukin, a heterodimeric cytokine which functions in innate immunity. IL-27 has pro- and anti-inflammatory properties, that can regulate T-helper cell development, suppress T-cell proliferation, stimulate cytotoxic T-cell activity, induce isotype switching in B-cells, and that has diverse effects on innate immune cells. Among its target cells are CD4 T-helper cells which can differentiate in type 1 effector cells (TH1), type 2 effector cells (TH2) and IL17 producing helper T-cells (TH17). It drives rapid clonal expansion of naive but not memory CD4 T-cells. It also strongly synergizes with IL-12 to trigger interferon-gamma/IFN-gamma production of naive CD4 T-cells, binds to the cytokine receptor WSX-1/TCCR which appears to be required but not sufficient for IL-27-mediated signal transduction. IL-27 potentiate the early phase of TH1 response and suppress TH2 and TH17 differentiation. It induces the differentiation of TH1 cells via two distinct pathways, p38 MAPK/TBX21- and ICAM1/ITGAL/ERK-dependent pathways. It also induces STAT1, STAT3, STAT4 and STAT5 phosphorylation and activates TBX21/T-Bet via STAT1 with resulting IL12RB2 up-regulation, an event crucial to TH1 cell commitment. It suppresses the expression of GATA3, the inhibitor TH1 cells development. In CD8 T-cells, it activates STATs as well as GZMB. IL-27 reveals to be a potent inhibitor of TH17 cell development and of IL-17 production. Indeed IL27 alone is also able to inhibit the production of IL17 by CD4 and CD8 T-cells. While IL-27 suppressed the development of pro-inflammatory Th17 cells via STAT1, it inhibits the development of anti-inflammatory inducible regulatory T-cells, iTreg, independently of STAT1. IL-27 also has an effect on cytokine production, it suppresses pro-inflammatory cytokine production such as IL2, IL4, IL5 and IL6 and activates suppressors of cytokine signaling such as SOCS1 and SOCS3. Apart from suppression of cytokine production, IL-27 also antagonizes the effects of some cytokines such as IL6 through direct effects on T-cells. Another important role of IL-27 is its antitumor activity as well as its antiangiogenic activity with activation of production of antiangiogenic chemokines such as IP-10/CXCL10 and MIG/CXCL9. The polypeptide is Interleukin-27 subunit alpha (Il27) (Mus musculus (Mouse)).